A 713-amino-acid polypeptide reads, in one-letter code: tRNA 5-methylaminomethyl-2-thiouridine biosynthesis bifunctional protein MnmC (713 aa).

A tRNA (mnm(5)s(2)U34)-methyltransferase region spans residues 1–300 (MTAEPNKPCQ…MAAILSSATP (300 aa)). The FAD-dependent cmnm(5)s(2)U34 oxidoreductase stretch occupies residues 306-713 (IGGGLASAHL…LRKLLKGKAL (408 aa)).

It in the N-terminal section; belongs to the methyltransferase superfamily. tRNA (mnm(5)s(2)U34)-methyltransferase family. The protein in the C-terminal section; belongs to the DAO family. The cofactor is FAD.

The protein resides in the cytoplasm. The catalysed reaction is 5-aminomethyl-2-thiouridine(34) in tRNA + S-adenosyl-L-methionine = 5-methylaminomethyl-2-thiouridine(34) in tRNA + S-adenosyl-L-homocysteine + H(+). In terms of biological role, catalyzes the last two steps in the biosynthesis of 5-methylaminomethyl-2-thiouridine (mnm(5)s(2)U) at the wobble position (U34) in tRNA. Catalyzes the FAD-dependent demodification of cmnm(5)s(2)U34 to nm(5)s(2)U34, followed by the transfer of a methyl group from S-adenosyl-L-methionine to nm(5)s(2)U34, to form mnm(5)s(2)U34. The protein is tRNA 5-methylaminomethyl-2-thiouridine biosynthesis bifunctional protein MnmC of Shewanella baltica (strain OS155 / ATCC BAA-1091).